A 467-amino-acid polypeptide reads, in one-letter code: UDP-glycosyltransferase 90A2 (467 aa).

UDP-alpha-D-glucose contacts are provided by residues S289, V341–Q343, H358–E366, and A380–Q383.

The protein belongs to the UDP-glycosyltransferase family.

The polypeptide is UDP-glycosyltransferase 90A2 (UGT90A2) (Arabidopsis thaliana (Mouse-ear cress)).